We begin with the raw amino-acid sequence, 264 residues long: 3-methyl-2-oxobutanoate hydroxymethyltransferase (264 aa).

Mg(2+)-binding residues include Asp44 and Asp83. Residues Asp44–Ser45, Asp83, and Lys112 contribute to the 3-methyl-2-oxobutanoate site. Glu114 serves as a coordination point for Mg(2+). Glu181 functions as the Proton acceptor in the catalytic mechanism.

This sequence belongs to the PanB family. Homodecamer; pentamer of dimers. It depends on Mg(2+) as a cofactor.

Its subcellular location is the cytoplasm. The catalysed reaction is 3-methyl-2-oxobutanoate + (6R)-5,10-methylene-5,6,7,8-tetrahydrofolate + H2O = 2-dehydropantoate + (6S)-5,6,7,8-tetrahydrofolate. It participates in cofactor biosynthesis; coenzyme A biosynthesis. Functionally, catalyzes the reversible reaction in which hydroxymethyl group from 5,10-methylenetetrahydrofolate is transferred onto alpha-ketoisovalerate to form ketopantoate. In Pyrobaculum arsenaticum (strain DSM 13514 / JCM 11321 / PZ6), this protein is 3-methyl-2-oxobutanoate hydroxymethyltransferase.